We begin with the raw amino-acid sequence, 270 residues long: Putative hydro-lyase Reut_A2449 (270 aa).

It belongs to the D-glutamate cyclase family.

The chain is Putative hydro-lyase Reut_A2449 from Cupriavidus pinatubonensis (strain JMP 134 / LMG 1197) (Cupriavidus necator (strain JMP 134)).